The primary structure comprises 289 residues: Serine/threonine-protein phosphatase Pgam5, mitochondrial (289 aa).

Residues 7 to 23 (FVCGTGAGLAVYYLQRL) traverse the membrane as a helical segment.

The protein belongs to the phosphoglycerate mutase family. BPG-dependent PGAM subfamily. As to quaternary structure, interacts with Pk92B/ASK1.

It localises to the mitochondrion outer membrane. It carries out the reaction O-phospho-L-seryl-[protein] + H2O = L-seryl-[protein] + phosphate. It catalyses the reaction O-phospho-L-threonyl-[protein] + H2O = L-threonyl-[protein] + phosphate. Displays phosphatase activity for serine/threonine residues, and dephosphorylates and activates Pk92B kinase. Has apparently no phosphoglycerate mutase activity. The polypeptide is Serine/threonine-protein phosphatase Pgam5, mitochondrial (Drosophila erecta (Fruit fly)).